The following is a 104-amino-acid chain: NADH-quinone oxidoreductase subunit K (104 aa).

3 consecutive transmembrane segments (helical) span residues 4–24, 31–51, and 67–87; these read VPASAYLTLAIILFCIGLFGA, VIVLVCMELMLNAANLNLVAF, and LFTMSVAAAEAAVGLAILIAL.

The protein belongs to the complex I subunit 4L family. In terms of assembly, NDH-1 is composed of 14 different subunits. Subunits NuoA, H, J, K, L, M, N constitute the membrane sector of the complex.

The protein resides in the cell membrane. The catalysed reaction is a quinone + NADH + 5 H(+)(in) = a quinol + NAD(+) + 4 H(+)(out). Functionally, NDH-1 shuttles electrons from NADH, via FMN and iron-sulfur (Fe-S) centers, to quinones in the respiratory chain. The immediate electron acceptor for the enzyme in this species is believed to be a menaquinone. Couples the redox reaction to proton translocation (for every two electrons transferred, four hydrogen ions are translocated across the cytoplasmic membrane), and thus conserves the redox energy in a proton gradient. The chain is NADH-quinone oxidoreductase subunit K from Bacillus cytotoxicus (strain DSM 22905 / CIP 110041 / 391-98 / NVH 391-98).